Consider the following 282-residue polypeptide: Aldo-keto reductase ML1669 (282 aa).

Tyr57 serves as the catalytic Proton donor. The NADPH site is built by Leu197, Val235, Arg237, Ser238, Ala239, Ser246, Asn247, and Arg273.

This sequence belongs to the aldo/keto reductase family.

This is Aldo-keto reductase ML1669 from Mycobacterium leprae (strain TN).